Here is a 210-residue protein sequence, read N- to C-terminus: Peptidyl-tRNA hydrolase (210 aa).

Tyr14 provides a ligand contact to tRNA. The active-site Proton acceptor is the His19. TRNA contacts are provided by Phe64, Asn66, and Asn112.

It belongs to the PTH family. Monomer.

Its subcellular location is the cytoplasm. It carries out the reaction an N-acyl-L-alpha-aminoacyl-tRNA + H2O = an N-acyl-L-amino acid + a tRNA + H(+). In terms of biological role, hydrolyzes ribosome-free peptidyl-tRNAs (with 1 or more amino acids incorporated), which drop off the ribosome during protein synthesis, or as a result of ribosome stalling. Catalyzes the release of premature peptidyl moieties from peptidyl-tRNA molecules trapped in stalled 50S ribosomal subunits, and thus maintains levels of free tRNAs and 50S ribosomes. This chain is Peptidyl-tRNA hydrolase, found in Methylorubrum extorquens (strain CM4 / NCIMB 13688) (Methylobacterium extorquens).